The primary structure comprises 351 residues: Tryptophan--tRNA ligase 2 (351 aa).

The segment at 1–24 (MPFVDLEVPTMTTPTPAATPARPR) is disordered. Over residues 9-24 (PTMTTPTPAATPARPR) the composition is skewed to low complexity. Residues 31-39 (PTGALHLGH) carry the 'HIGH' region motif. The 'KMSKS' region signature appears at 215 to 219 (KMSKS). Lys218 lines the ATP pocket.

Belongs to the class-I aminoacyl-tRNA synthetase family. In terms of assembly, homodimer. Forms a complex with nos; one homodimer of trpS2 binds one homodimer of nos.

The enzyme catalyses tRNA(Trp) + L-tryptophan + ATP = L-tryptophyl-tRNA(Trp) + AMP + diphosphate + H(+). Its function is as follows. Catalyzes the formation of 5'adenyl-Trp and tRNA(Trp) but with 5-fold less activity than TrpRS. Increases the solubility of the nitric oxide synthase oxygenase (nos), as well as its affinity for substrate L-arginine and its nitric-oxide synthase activity. The complex between trpS2 and nos catalyzes the regioselective nitration of tryptophan at the 4-position. The polypeptide is Tryptophan--tRNA ligase 2 (trpS2) (Deinococcus radiodurans (strain ATCC 13939 / DSM 20539 / JCM 16871 / CCUG 27074 / LMG 4051 / NBRC 15346 / NCIMB 9279 / VKM B-1422 / R1)).